The following is a 110-amino-acid chain: Large ribosomal subunit protein uL22 (110 aa).

It belongs to the universal ribosomal protein uL22 family. Part of the 50S ribosomal subunit.

Its function is as follows. This protein binds specifically to 23S rRNA; its binding is stimulated by other ribosomal proteins, e.g. L4, L17, and L20. It is important during the early stages of 50S assembly. It makes multiple contacts with different domains of the 23S rRNA in the assembled 50S subunit and ribosome. The globular domain of the protein is located near the polypeptide exit tunnel on the outside of the subunit, while an extended beta-hairpin is found that lines the wall of the exit tunnel in the center of the 70S ribosome. In Vibrio parahaemolyticus serotype O3:K6 (strain RIMD 2210633), this protein is Large ribosomal subunit protein uL22.